The primary structure comprises 206 residues: uncharacterized protein (206 aa).

This is an uncharacterized protein from Aquifex aeolicus (strain VF5).